The following is a 173-amino-acid chain: Photosystem I assembly protein Ycf3 (173 aa).

TPR repeat units lie at residues 35 to 68 (AYIY…EENA), 72 to 105 (GETL…NPKQ), and 120 to 153 (GRAL…YPGG).

It belongs to the Ycf3 family.

Its subcellular location is the cellular thylakoid membrane. Essential for the assembly of the photosystem I (PSI) complex. May act as a chaperone-like factor to guide the assembly of the PSI subunits. This chain is Photosystem I assembly protein Ycf3, found in Prochlorococcus marinus (strain SARG / CCMP1375 / SS120).